A 256-amino-acid chain; its full sequence is Small ribosomal subunit protein uS2 (256 aa).

It belongs to the universal ribosomal protein uS2 family.

This Geotalea uraniireducens (strain Rf4) (Geobacter uraniireducens) protein is Small ribosomal subunit protein uS2.